The chain runs to 203 residues: tRNA (pseudouridine(54)-N(1))-methyltransferase (203 aa).

Positions 125, 146, and 179 each coordinate S-adenosyl-L-methionine.

This sequence belongs to the methyltransferase superfamily. TrmY family. In terms of assembly, homodimer.

The protein localises to the cytoplasm. The enzyme catalyses pseudouridine(54) in tRNA + S-adenosyl-L-methionine = N(1)-methylpseudouridine(54) in tRNA + S-adenosyl-L-homocysteine + H(+). Its function is as follows. Specifically catalyzes the N1-methylation of pseudouridine at position 54 (Psi54) in tRNAs. In Methanopyrus kandleri (strain AV19 / DSM 6324 / JCM 9639 / NBRC 100938), this protein is tRNA (pseudouridine(54)-N(1))-methyltransferase.